Consider the following 162-residue polypeptide: CASP-like protein 1C1 (162 aa).

Residues 1–7 lie on the Cytoplasmic side of the membrane; the sequence is MAKLHRL. Residues 8–28 traverse the membrane as a helical segment; that stretch reads ISAVLRLAAAGAAAAAAIIMV. Residues 29 to 50 are Extracellular-facing; that stretch reads TSHETTSFFGIEMEAKYSYTPS. Residues 51-71 form a helical membrane-spanning segment; sequence FVFFVVAFAVAFAYSLLALLA. Residues 72–79 are Cytoplasmic-facing; it reads RPGSTASR. The chain crosses the membrane as a helical span at residues 80–100; the sequence is LLLLSDVMVGMLLTGAVAATG. The Extracellular segment spans residues 101 to 128; it reads AISQVGKSGNEHAGWLPICAQVQAYCSH. The chain crosses the membrane as a helical span at residues 129–149; that stretch reads VMGALIAGFVSLLLYFLIIMY. The Cytoplasmic portion of the chain corresponds to 150–162; the sequence is SLHAVAEPLCSCH.

Belongs to the Casparian strip membrane proteins (CASP) family. As to quaternary structure, homodimer and heterodimers.

It localises to the cell membrane. This is CASP-like protein 1C1 from Sorghum bicolor (Sorghum).